Here is a 735-residue protein sequence, read N- to C-terminus: Polycomb protein sop-2 (735 aa).

Over residues 1–15 the composition is skewed to polar residues; sequence MSSNLTSNEMSSTSA. Disordered stretches follow at residues 1-59, 223-288, and 300-534; these read MSSN…SSSS, AARS…APAA, and PQES…PVLQ. The RNA-binding stretch occupies residues 224 to 503; that stretch reads ARSSRMAARR…APATPATPAS (280 aa). The span at 239–288 shows a compositional bias: low complexity; sequence YRGAFRGAARGAPSRRPAPAAEVAPETPVAAPMAPAAPAAPATPEAAPAA. Basic and acidic residues-rich tracts occupy residues 317-355 and 389-398; these read DTSK…DGGR and RAAEKKKPED. Residues 399–413 are compositionally biased toward acidic residues; sequence SDAAEEQEVEMEVDN. The segment covering 450-470 has biased composition (basic and acidic residues); it reads VEPKKEPVDEPAEKIPKRSEA. A compositionally biased stretch (low complexity) spans 471-504; that stretch reads APEVPATATTKEAPPSTSSSPPDAPATPATPASS. A compositionally biased stretch (polar residues) spans 520 to 534; the sequence is LTGSPPESETPPVLQ. An SAM-like region spans residues 621-712; sequence LVENNHEATL…YGTEVLNHYR (92 aa).

In terms of assembly, homodimer. Interacts with ubc-9. Binds through its N-terminal region to the N-terminal region of sor-1. In terms of processing, sumoylated by ubc-9. Sumoylation is required for the transcriptional regulation of homeotic genes. In terms of tissue distribution, widely expressed. Weakly expressed in most somatic cells of 50-cell stage embryos. At 200 cell stage, it is strongly expressed. By comma stage, it is expressed in most somatic cells.

It is found in the nucleus. Polycomb group (PcG) protein. PcG proteins act by forming multiprotein complexes, which are required to maintain the transcriptionally repressive state of homeotic genes throughout development. PcG proteins are not required to initiate repression, but to maintain it during later stages of development. Also required to repress expression of other genes and for localization of sor-1. Binds RNA. This is Polycomb protein sop-2 (sop-2) from Caenorhabditis elegans.